The sequence spans 343 residues: Anthranilate phosphoribosyltransferase (343 aa).

5-phospho-alpha-D-ribose 1-diphosphate is bound by residues Gly84, 87–88 (GD), Thr92, 94–97 (NIST), 112–120 (KHGNRSASS), and Ser124. An anthranilate-binding site is contributed by Gly84. Residue Ser96 coordinates Mg(2+). Asn115 contacts anthranilate. An anthranilate-binding site is contributed by Arg170. Positions 229 and 230 each coordinate Mg(2+).

This sequence belongs to the anthranilate phosphoribosyltransferase family. Homodimer. The cofactor is Mg(2+).

The catalysed reaction is N-(5-phospho-beta-D-ribosyl)anthranilate + diphosphate = 5-phospho-alpha-D-ribose 1-diphosphate + anthranilate. The protein operates within amino-acid biosynthesis; L-tryptophan biosynthesis; L-tryptophan from chorismate: step 2/5. Catalyzes the transfer of the phosphoribosyl group of 5-phosphorylribose-1-pyrophosphate (PRPP) to anthranilate to yield N-(5'-phosphoribosyl)-anthranilate (PRA). This Bordetella bronchiseptica (strain ATCC BAA-588 / NCTC 13252 / RB50) (Alcaligenes bronchisepticus) protein is Anthranilate phosphoribosyltransferase.